The chain runs to 75 residues: Small ribosomal subunit protein bS18 (75 aa).

Belongs to the bacterial ribosomal protein bS18 family. Part of the 30S ribosomal subunit. Forms a tight heterodimer with protein bS6.

Its function is as follows. Binds as a heterodimer with protein bS6 to the central domain of the 16S rRNA, where it helps stabilize the platform of the 30S subunit. This chain is Small ribosomal subunit protein bS18, found in Colwellia psychrerythraea (strain 34H / ATCC BAA-681) (Vibrio psychroerythus).